Reading from the N-terminus, the 585-residue chain is Bifunctional purine biosynthesis protein ade10 (585 aa).

The MGS-like domain occupies 1-142 (MYALLSVYDK…KNHARVTILS (142 aa)). IMP is bound by residues 30 to 33 (SGGT), 60 to 63 (RVKT), 97 to 98 (CN), and 121 to 122 (DI). K133 acts as the Proton donor/acceptor; for FAICAR cyclization activity in catalysis. 5-amino-1-(5-phospho-beta-D-ribosyl)imidazole-4-carboxamide contacts are provided by residues 200 to 201 (RY), H260, G308, D331, N423, and R443. The active-site Proton acceptor; for AICAR formyltransferase activity is H260. I444 is a binding site for (6R)-10-formyltetrahydrofolate. F534 serves as a coordination point for 5-amino-1-(5-phospho-beta-D-ribosyl)imidazole-4-carboxamide. (6R)-10-formyltetrahydrofolate is bound by residues D539 and 558 to 559 (SV). A 5-amino-1-(5-phospho-beta-D-ribosyl)imidazole-4-carboxamide-binding site is contributed by R581.

The protein belongs to the PurH family. Homodimer.

It is found in the cytoplasm. It localises to the cytosol. The catalysed reaction is (6R)-10-formyltetrahydrofolate + 5-amino-1-(5-phospho-beta-D-ribosyl)imidazole-4-carboxamide = 5-formamido-1-(5-phospho-D-ribosyl)imidazole-4-carboxamide + (6S)-5,6,7,8-tetrahydrofolate. The enzyme catalyses IMP + H2O = 5-formamido-1-(5-phospho-D-ribosyl)imidazole-4-carboxamide. It participates in purine metabolism; IMP biosynthesis via de novo pathway; 5-formamido-1-(5-phospho-D-ribosyl)imidazole-4-carboxamide from 5-amino-1-(5-phospho-D-ribosyl)imidazole-4-carboxamide (10-formyl THF route): step 1/1. It functions in the pathway purine metabolism; IMP biosynthesis via de novo pathway; IMP from 5-formamido-1-(5-phospho-D-ribosyl)imidazole-4-carboxamide: step 1/1. Bifunctional enzyme that catalyzes the last two steps of purine biosynthesis. Acts as a transformylase that incorporates a formyl group to the AMP analog AICAR (5-amino-1-(5-phospho-beta-D-ribosyl)imidazole-4-carboxamide) to produce the intermediate formyl-AICAR (FAICAR). Also catalyzes the cyclization of FAICAR to IMP. The protein is Bifunctional purine biosynthesis protein ade10 (ade10) of Schizosaccharomyces pombe (strain 972 / ATCC 24843) (Fission yeast).